We begin with the raw amino-acid sequence, 578 residues long: Arginine--tRNA ligase (578 aa).

The 'HIGH' region motif lies at 127–137 (PNLAKEMHVGH).

Belongs to the class-I aminoacyl-tRNA synthetase family. In terms of assembly, monomer.

The protein localises to the cytoplasm. It carries out the reaction tRNA(Arg) + L-arginine + ATP = L-arginyl-tRNA(Arg) + AMP + diphosphate. The protein is Arginine--tRNA ligase of Pseudomonas savastanoi pv. phaseolicola (strain 1448A / Race 6) (Pseudomonas syringae pv. phaseolicola (strain 1448A / Race 6)).